The primary structure comprises 282 residues: Bis(5'-nucleosyl)-tetraphosphatase, symmetrical (282 aa).

Belongs to the Ap4A hydrolase family.

The enzyme catalyses P(1),P(4)-bis(5'-adenosyl) tetraphosphate + H2O = 2 ADP + 2 H(+). Hydrolyzes diadenosine 5',5'''-P1,P4-tetraphosphate to yield ADP. This is Bis(5'-nucleosyl)-tetraphosphatase, symmetrical from Paraburkholderia phymatum (strain DSM 17167 / CIP 108236 / LMG 21445 / STM815) (Burkholderia phymatum).